A 711-amino-acid polypeptide reads, in one-letter code: Polyribonucleotide nucleotidyltransferase (711 aa).

The FFRR loop; important for RNA binding stretch occupies residues 77–80 (FFRR). The interaction with RNase E stretch occupies residues 327 to 331 (LDVRT). Residues aspartate 486 and aspartate 492 each contribute to the Mg(2+) site. The KH domain maps to 553–612 (PRIHTIKINPDKIKDVIGKGGSVIRALTEETGTTIEIEDDGTVKIAATDGEKAKHAIRRI). Positions 622-690 (GRVYTGKVTR…RQGRIRLSIK (69 aa)) constitute an S1 motif domain. The interval 689 to 711 (IKEATEQSQPAAAPEAPAAEQGE) is disordered. Low complexity predominate over residues 694 to 711 (EQSQPAAAPEAPAAEQGE).

The protein belongs to the polyribonucleotide nucleotidyltransferase family. In terms of assembly, component of the RNA degradosome, which is a multiprotein complex involved in RNA processing and mRNA degradation. Interacts with RNase E (rne). Homotrimer. The homotrimer forms a ring-like structure with a central channel, where RNA molecules can bind. RNA molecules bind between neighboring subunits. Might interact with YicC. Requires Mg(2+) as cofactor. Mn(2+) serves as cofactor.

Its subcellular location is the cytoplasm. It catalyses the reaction RNA(n+1) + phosphate = RNA(n) + a ribonucleoside 5'-diphosphate. In terms of biological role, involved in mRNA degradation. Catalyzes the phosphorolysis of single-stranded polyribonucleotides processively in the 3'- to 5'-direction. Also involved, along with RNase II, in tRNA processing. RNases II and R contribute to rRNA degradation during starvation, while RNase R and PNPase are the major contributors to quality control of rRNA during steady state growth. Contributes to degradation of some small RNAs (sRNA). The sequence is that of Polyribonucleotide nucleotidyltransferase from Escherichia coli (strain K12).